Here is a 305-residue protein sequence, read N- to C-terminus: UDP-N-acetylenolpyruvoylglucosamine reductase (305 aa).

The region spanning 22-190 (KVGGAADFFA…LSARFRLQAG (169 aa)) is the FAD-binding PCMH-type domain. R169 is an active-site residue. Residue S220 is the Proton donor of the active site. The active site involves E290.

It belongs to the MurB family. It depends on FAD as a cofactor.

The protein localises to the cytoplasm. It catalyses the reaction UDP-N-acetyl-alpha-D-muramate + NADP(+) = UDP-N-acetyl-3-O-(1-carboxyvinyl)-alpha-D-glucosamine + NADPH + H(+). The protein operates within cell wall biogenesis; peptidoglycan biosynthesis. Cell wall formation. The chain is UDP-N-acetylenolpyruvoylglucosamine reductase from Synechococcus sp. (strain RCC307).